We begin with the raw amino-acid sequence, 353 residues long: Photosystem II protein D1 (353 aa).

Position 2 is an N-acetylthreonine (Thr-2). At Thr-2 the chain carries Phosphothreonine. A run of 3 helical transmembrane segments spans residues 29–46 (YIGW…TATS), 118–133 (HFLL…EWEL), and 142–156 (WIAV…AATA). His-118 provides a ligand contact to chlorophyll a. A pheophytin a-binding site is contributed by Tyr-126. [CaMn4O5] cluster contacts are provided by Asp-170 and Glu-189. A helical membrane pass occupies residues 197–218 (FHMLGVAGVFGGSLFSAMHGSL). His-198 is a chlorophyll a binding site. A quinone is bound by residues His-215 and 264-265 (SF). His-215 provides a ligand contact to Fe cation. His-272 is a Fe cation binding site. A helical transmembrane segment spans residues 274–288 (FLAAWPVVGIWFTAL). [CaMn4O5] cluster contacts are provided by His-332, Glu-333, Asp-342, and Ala-344. A propeptide spanning residues 345–353 (AVESPSING) is cleaved from the precursor.

Belongs to the reaction center PufL/M/PsbA/D family. As to quaternary structure, PSII is composed of 1 copy each of membrane proteins PsbA, PsbB, PsbC, PsbD, PsbE, PsbF, PsbH, PsbI, PsbJ, PsbK, PsbL, PsbM, PsbT, PsbX, PsbY, PsbZ, Psb30/Ycf12, at least 3 peripheral proteins of the oxygen-evolving complex and a large number of cofactors. It forms dimeric complexes. The D1/D2 heterodimer binds P680, chlorophylls that are the primary electron donor of PSII, and subsequent electron acceptors. It shares a non-heme iron and each subunit binds pheophytin, quinone, additional chlorophylls, carotenoids and lipids. D1 provides most of the ligands for the Mn4-Ca-O5 cluster of the oxygen-evolving complex (OEC). There is also a Cl(-1) ion associated with D1 and D2, which is required for oxygen evolution. The PSII complex binds additional chlorophylls, carotenoids and specific lipids. is required as a cofactor. Post-translationally, tyr-161 forms a radical intermediate that is referred to as redox-active TyrZ, YZ or Y-Z. In terms of processing, C-terminally processed by CTPA; processing is essential to allow assembly of the oxygen-evolving complex and thus photosynthetic growth.

It localises to the plastid. It is found in the chloroplast thylakoid membrane. It carries out the reaction 2 a plastoquinone + 4 hnu + 2 H2O = 2 a plastoquinol + O2. Functionally, photosystem II (PSII) is a light-driven water:plastoquinone oxidoreductase that uses light energy to abstract electrons from H(2)O, generating O(2) and a proton gradient subsequently used for ATP formation. It consists of a core antenna complex that captures photons, and an electron transfer chain that converts photonic excitation into a charge separation. The D1/D2 (PsbA/PsbD) reaction center heterodimer binds P680, the primary electron donor of PSII as well as several subsequent electron acceptors. This chain is Photosystem II protein D1, found in Sinapis alba (White mustard).